A 304-amino-acid polypeptide reads, in one-letter code: Protease HtpX homolog (304 aa).

Helical transmembrane passes span 14–34 (VFII…IGII) and 39–59 (YLNG…IMVM). A Zn(2+)-binding site is contributed by H144. E145 is an active-site residue. H148 contacts Zn(2+). Helical transmembrane passes span 159-179 (IAIA…RLIF) and 202-222 (IIIY…ATAI). Residue E231 coordinates Zn(2+). Residues 275–304 (SSPLKSKKDKPGLFDSHPPISSRIERLENM) are disordered.

The protein belongs to the peptidase M48B family. Zn(2+) is required as a cofactor.

The protein localises to the cell membrane. In Listeria innocua serovar 6a (strain ATCC BAA-680 / CLIP 11262), this protein is Protease HtpX homolog.